The primary structure comprises 203 residues: MFEGPVQNLIDELGKLPGIGPKSAQRIAFHLLSVEPQDIDRLTAVLVKVRDDVRFCTVCGNVSDDERCRICSDTRRDASVVCVVEEPKDVQAVERTREFRGRYHVLGGALDPLSGIGPEQLRIRELLSRIGERVDDVGITEVIIATDPNTEGEATATYLVRMLRDMPGLTVTRIASGLPMGGDLEFADELTLGRALTGRRTMV.

The segment at 56 to 71 (CTVCGNVSDDERCRIC) adopts a C4-type zinc-finger fold. A Toprim domain is found at 79-179 (SVVCVVEEPK…TVTRIASGLP (101 aa)).

The protein belongs to the RecR family.

In terms of biological role, may play a role in DNA repair. It seems to be involved in an RecBC-independent recombinational process of DNA repair. It may act with RecF and RecO. This Mycobacterium leprae (strain TN) protein is Recombination protein RecR.